A 250-amino-acid chain; its full sequence is Pyridoxine 5'-phosphate synthase (250 aa).

Asn11 is a 3-amino-2-oxopropyl phosphate binding site. 13–14 (DH) lines the 1-deoxy-D-xylulose 5-phosphate pocket. Arg22 contacts 3-amino-2-oxopropyl phosphate. Residue His47 is the Proton acceptor of the active site. Residues Arg49 and His54 each contribute to the 1-deoxy-D-xylulose 5-phosphate site. The Proton acceptor role is filled by Glu74. A 1-deoxy-D-xylulose 5-phosphate-binding site is contributed by Thr104. The Proton donor role is filled by His198. 3-amino-2-oxopropyl phosphate contacts are provided by residues Gly199 and 220–221 (GY).

The protein belongs to the PNP synthase family. As to quaternary structure, homooctamer; tetramer of dimers.

The protein resides in the cytoplasm. The catalysed reaction is 3-amino-2-oxopropyl phosphate + 1-deoxy-D-xylulose 5-phosphate = pyridoxine 5'-phosphate + phosphate + 2 H2O + H(+). The protein operates within cofactor biosynthesis; pyridoxine 5'-phosphate biosynthesis; pyridoxine 5'-phosphate from D-erythrose 4-phosphate: step 5/5. Functionally, catalyzes the complicated ring closure reaction between the two acyclic compounds 1-deoxy-D-xylulose-5-phosphate (DXP) and 3-amino-2-oxopropyl phosphate (1-amino-acetone-3-phosphate or AAP) to form pyridoxine 5'-phosphate (PNP) and inorganic phosphate. The protein is Pyridoxine 5'-phosphate synthase of Bradyrhizobium diazoefficiens (strain JCM 10833 / BCRC 13528 / IAM 13628 / NBRC 14792 / USDA 110).